The chain runs to 460 residues: Serine incorporator 5 (460 aa).

Residues 1–36 (MCTPCCVSQLACCCGSAACSLCCGCCPKIKQSTSTR) lie on the Extracellular side of the membrane. Residues 37-57 (FMYALFFMLVTVTCVIMMSPT) traverse the membrane as a helical segment. Over 58–89 (VEMAMREHIPFYSQMCQQLNAGENCSTLVGYS) the chain is Cytoplasmic. A helical transmembrane segment spans residues 90–110 (AVYKVCFGMACFFFFFAVFTI). Topologically, residues 111–124 (RVQNSTGCRAAVHN) are extracellular. Asn114 is a glycosylation site (N-linked (GlcNAc...) asparagine). The helical transmembrane segment at 125–145 (GFWFFKFVALLACCAGGFFLP) threads the bilayer. Over 146–156 (NQDQFLEVWRY) the chain is Cytoplasmic. The helical transmembrane segment at 157–177 (VGAAGGFLFIIIQLMLLVQFA) threads the bilayer. The Extracellular portion of the chain corresponds to 178-197 (HRWNQNWSSGATYNKLWYAA). N-linked (GlcNAc...) asparagine glycosylation occurs at Asn183. A helical transmembrane segment spans residues 198-218 (LALVTLVLFSVAVGGMVFMFM). Over 219-230 (YYTHPEACFLNK) the chain is Cytoplasmic. Residues 231–251 (IFLGVNGGLCFIVSLLAISPC) traverse the membrane as a helical segment. At 252 to 259 (IQTFQPTS) the chain is on the extracellular side. A helical transmembrane segment spans residues 260 to 280 (GLLQPAVITLYVMYLTFSALA). Residues 281-311 (SKPIEMVEDEIKGNITVCVFPFKSGLKSDTN) are Cytoplasmic-facing. The chain crosses the membrane as a helical span at residues 312 to 332 (IVTGVGTAILFCCILYSCLIS). Over 333–391 (TTKRSSAALQVYRNDMPENERARCCFCWVDDTEDYDDEKTSGGQNVKYDERDGTVYSYC) the chain is Extracellular. A helical membrane pass occupies residues 392-412 (FFHFVFFLGSLYVMMTVTNWF). At 413-433 (HYDNAKIERLLEGSWSVFWIK) the chain is on the cytoplasmic side. A helical membrane pass occupies residues 434-454 (MASSWVCLFFYMWTLVVPMLF). At 455 to 460 (PQRFQA) the chain is on the extracellular side.

This sequence belongs to the TDE1 family.

It is found in the cell membrane. It carries out the reaction a 1,2-diacyl-sn-glycero-3-phospho-L-serine(in) = a 1,2-diacyl-sn-glycero-3-phospho-L-serine(out). The enzyme catalyses a 1,2-diacyl-sn-glycero-3-phosphocholine(in) = a 1,2-diacyl-sn-glycero-3-phosphocholine(out). It catalyses the reaction a 1,2-diacyl-sn-glycero-3-phosphoethanolamine(in) = a 1,2-diacyl-sn-glycero-3-phosphoethanolamine(out). In terms of biological role, restriction factor required to restrict infectivity of gammaretroviruses: acts by inhibiting an early step of viral infection. Impairs the penetration of the viral particle into the cytoplasm. Non-ATP-dependent, non-specific lipid transporter for phosphatidylserine, phosphatidylcholine, and phosphatidylethanolamine. Functions as a scramblase that flips lipids in both directions across the membrane. Phospholipid scrambling results in gammaretroviral surface exposure of phosphatidylserine and loss of membrane asymmetry, which leads to loss of infectivity. Enhances the incorporation of serine into phosphatidylserine and sphingolipids. The polypeptide is Serine incorporator 5 (serinc5) (Danio rerio (Zebrafish)).